The sequence spans 1037 residues: Sentrin-specific protease 7 (1037 aa).

Over residues M1 to R10 the composition is skewed to basic residues. 2 disordered regions span residues M1 to D28 and A182 to N420. Phosphoserine is present on residues S12, S13, S25, and S189. Composition is skewed to polar residues over residues A182–H211 and T253–N263. The segment covering V289 to S299 has biased composition (basic residues). Polar residues predominate over residues N300–S309. Composition is skewed to basic and acidic residues over residues S310 to E320 and K330 to Q340. Residues N381–A399 show a composition bias toward low complexity. Phosphoserine occurs at positions 432 and 433. The interval L747 to S1037 is protease. H847 is a catalytic residue. The tract at residues E873–M910 is disordered. The segment covering S879–P890 has biased composition (basic and acidic residues). Over residues T898–M910 the composition is skewed to low complexity. The active site involves D926. The Nucleophile role is filled by C979.

It belongs to the peptidase C48 family.

The protein localises to the cytoplasm. In terms of biological role, protease that acts as a positive regulator of the cGAS-STING pathway by catalyzing desumoylation of CGAS. Desumoylation of CGAS promotes DNA-binding activity of CGAS, subsequent oligomerization and activation. Deconjugates SUMO2 and SUMO3 from targeted proteins, but not SUMO1. Catalyzes the deconjugation of poly-SUMO2 and poly-SUMO3 chains. Has very low efficiency in processing full-length SUMO proteins to their mature forms. In Rattus norvegicus (Rat), this protein is Sentrin-specific protease 7 (Senp7).